The primary structure comprises 888 residues: C2H2 zinc finger transcription factor sltA (888 aa).

3 disordered regions span residues 1 to 78 (MSTS…QRSP), 132 to 176 (IDSQ…SSEN), and 388 to 407 (RSSMPSNREPAQNGAKASAP). 3 stretches are compositionally biased toward polar residues: residues 23 to 32 (PSLSASTSIE), 167 to 176 (GLGTSLSSEN), and 388 to 397 (RSSMPSNREP). 2 consecutive C2H2-type zinc fingers follow at residues 500–522 (QKCKDCDKVFKRPCDLTKHEKTH) and 561–586 (YKCKFAPCTYSSKRESNCKQHMEKAH). Residues 589–663 (DYVRSKHNGR…PTQTGSGDFP (75 aa)) are disordered. Positions 602 to 632 (KASNGATPQTPSIATPSSKAQGITTPLTGSE) are enriched in polar residues.

It is found in the nucleus. Functionally, transcription factor that contributes to azole resistance by coregulating the expression of the drug target erg11A and the drug efflux pump mdr1. Binds to the 5'-AGGCA-3' motif in the promoters of ergosterol biosynthesis and drug pump genes to regulate their expression. Is able to interact with the promoters of sltA, sltB, erg11A, erg13A, erg24A, mdr1, abcE and mfsC. Involved in antifungal drug resistance to azoles, terbinafine, and simvastatin but not amphotericin B or caspofungin. This Aspergillus fumigatus (strain CBS 144.89 / FGSC A1163 / CEA10) (Neosartorya fumigata) protein is C2H2 zinc finger transcription factor sltA.